A 212-amino-acid chain; its full sequence is Pyridoxine/pyridoxamine 5'-phosphate oxidase (212 aa).

A disordered region spans residues 1 to 20; that stretch reads MSDSAMEPQNPLTSGDFTAA. FMN contacts are provided by residues 59–64, 74–75, K81, and Q103; these read RMVLLK and YT. K64 provides a ligand contact to substrate. 3 residues coordinate substrate: Y121, R125, and S129. FMN contacts are provided by residues 138 to 139 and W183; that span reads QS. 189 to 191 is a substrate binding site; the sequence is RLH. R193 contributes to the FMN binding site.

The protein belongs to the pyridoxamine 5'-phosphate oxidase family. Homodimer. It depends on FMN as a cofactor.

The enzyme catalyses pyridoxamine 5'-phosphate + O2 + H2O = pyridoxal 5'-phosphate + H2O2 + NH4(+). The catalysed reaction is pyridoxine 5'-phosphate + O2 = pyridoxal 5'-phosphate + H2O2. It participates in cofactor metabolism; pyridoxal 5'-phosphate salvage; pyridoxal 5'-phosphate from pyridoxamine 5'-phosphate: step 1/1. Its pathway is cofactor metabolism; pyridoxal 5'-phosphate salvage; pyridoxal 5'-phosphate from pyridoxine 5'-phosphate: step 1/1. In terms of biological role, catalyzes the oxidation of either pyridoxine 5'-phosphate (PNP) or pyridoxamine 5'-phosphate (PMP) into pyridoxal 5'-phosphate (PLP). The sequence is that of Pyridoxine/pyridoxamine 5'-phosphate oxidase from Azorhizobium caulinodans (strain ATCC 43989 / DSM 5975 / JCM 20966 / LMG 6465 / NBRC 14845 / NCIMB 13405 / ORS 571).